The chain runs to 234 residues: Leucyl/phenylalanyl-tRNA--protein transferase (234 aa).

The protein belongs to the L/F-transferase family.

The protein resides in the cytoplasm. It carries out the reaction N-terminal L-lysyl-[protein] + L-leucyl-tRNA(Leu) = N-terminal L-leucyl-L-lysyl-[protein] + tRNA(Leu) + H(+). The catalysed reaction is N-terminal L-arginyl-[protein] + L-leucyl-tRNA(Leu) = N-terminal L-leucyl-L-arginyl-[protein] + tRNA(Leu) + H(+). It catalyses the reaction L-phenylalanyl-tRNA(Phe) + an N-terminal L-alpha-aminoacyl-[protein] = an N-terminal L-phenylalanyl-L-alpha-aminoacyl-[protein] + tRNA(Phe). Functionally, functions in the N-end rule pathway of protein degradation where it conjugates Leu, Phe and, less efficiently, Met from aminoacyl-tRNAs to the N-termini of proteins containing an N-terminal arginine or lysine. This is Leucyl/phenylalanyl-tRNA--protein transferase from Escherichia coli O157:H7 (strain EC4115 / EHEC).